The sequence spans 176 residues: KxDL motif-containing protein 1 (176 aa).

The residue at position 1 (M1) is an N-acetylmethionine. The disordered stretch occupies residues 95 to 176 (HPEAFSHIPE…HTDDEEMPGE (82 aa)). A compositionally biased stretch (low complexity) spans 119 to 131 (STTTTIATSEQST). Residues 132–145 (GSCDTSPDTVSPSL) show a composition bias toward polar residues.

It belongs to the KXD1 family. Component of the BLOC-one-related complex (BORC) which is composed of BLOC1S1, BLOC1S2, BORCS5, BORCS6, BORCS7, BORCS8, KXD1 and SNAPIN. Associates with the BLOC-1 complex. Interacts with BLOC1S1. Interacts with DTNBP1/BLOC1S7 (via coiled-coil domain).

It is found in the lysosome membrane. Its function is as follows. As part of the BORC complex may play a role in lysosomes movement and localization at the cell periphery. Associated with the cytosolic face of lysosomes, the BORC complex may recruit ARL8B and couple lysosomes to microtubule plus-end-directed kinesin motor. May also be involved in the biogenesis of lysosome-related organelles such as melanosomes. The chain is KxDL motif-containing protein 1 (KXD1) from Bos taurus (Bovine).